Here is a 716-residue protein sequence, read N- to C-terminus: Polyribonucleotide nucleotidyltransferase (716 aa).

Mg(2+)-binding residues include Asp490 and Asp496. The region spanning 556–615 (PKIETLTIPTDKIREVIGSGGKVIREIVETSGAKVDINDDGVIKIASNDQAAIKKAYDMI) is the KH domain. The S1 motif domain maps to 625–693 (GQIYTGKVVK…ERGKVRLGMK (69 aa)). Positions 695-716 (VDQETGQEIQPEKKEKEEAGEA) are disordered. Residues 704 to 716 (QPEKKEKEEAGEA) show a composition bias toward basic and acidic residues.

It belongs to the polyribonucleotide nucleotidyltransferase family. Requires Mg(2+) as cofactor.

The protein resides in the cytoplasm. It catalyses the reaction RNA(n+1) + phosphate = RNA(n) + a ribonucleoside 5'-diphosphate. Functionally, involved in mRNA degradation. Catalyzes the phosphorolysis of single-stranded polyribonucleotides processively in the 3'- to 5'-direction. The protein is Polyribonucleotide nucleotidyltransferase of Cereibacter sphaeroides (strain ATCC 17029 / ATH 2.4.9) (Rhodobacter sphaeroides).